The primary structure comprises 173 residues: Transcriptional repressor NrdR (173 aa).

A zinc finger lies at 3-34 (CPYCGSLDTQVKDSRPTEDNTAIRRRRVCPDC). Residues 49 to 139 (LMVVKRSGRR…VYRNFREARD (91 aa)) enclose the ATP-cone domain.

This sequence belongs to the NrdR family. The cofactor is Zn(2+).

Functionally, negatively regulates transcription of bacterial ribonucleotide reductase nrd genes and operons by binding to NrdR-boxes. The protein is Transcriptional repressor NrdR of Azorhizobium caulinodans (strain ATCC 43989 / DSM 5975 / JCM 20966 / LMG 6465 / NBRC 14845 / NCIMB 13405 / ORS 571).